The sequence spans 805 residues: Transmembrane channel-like protein 6 (805 aa).

Residues M1–E29 are disordered. Residues M1–C209 are Lumenal-facing. At T89 the chain carries Phosphothreonine. Omega-N-methylarginine is present on R94. N103 carries N-linked (GlcNAc...) asparagine glycosylation. T105 carries the post-translational modification Phosphothreonine. Residues V210 to W230 traverse the membrane as a helical segment. Topologically, residues R231–F249 are cytoplasmic. The chain crosses the membrane as a helical span at residues L250–I270. Residues M271–N338 are Lumenal-facing. N-linked (GlcNAc...) asparagine glycosylation occurs at N312. Residues M339–V359 form a helical membrane-spanning segment. Residues Y360 to A431 are Cytoplasmic-facing. A helical transmembrane segment spans residues A432–V452. Residues H453–E469 lie on the Lumenal side of the membrane. Residues A470–C490 form a helical membrane-spanning segment. The Cytoplasmic portion of the chain corresponds to R491–E505. Residues V506 to Y526 traverse the membrane as a helical segment. The Lumenal portion of the chain corresponds to H527–L553. Residues V554–I574 traverse the membrane as a helical segment. Residues S575–W604 are Cytoplasmic-facing. The chain crosses the membrane as a helical span at residues L605–F625. The Lumenal segment spans residues Y626–T650. The chain crosses the membrane as a helical span at residues V651–A671. Residues V672 to T722 are Cytoplasmic-facing. Residues F723 to V743 traverse the membrane as a helical segment. At R744–A805 the chain is on the lumenal side. The interval K778–A805 is disordered.

Belongs to the TMC family. As to quaternary structure, interacts with TMC8. Interacts and forms a complex with TMC8 and CIB1; the interaction stabilizes each component of the complex. Interacts and forms a complex with TMC8 and SLC30A1/ZNT1; the interaction regulates zinc transport into the ER. In terms of assembly, (Microbial infection) Interacts with human papillomavirus 16/HPV16 protein E5; the interaction alleviates TMC6-mediated transcription factors inhibition. As to expression, expressed in placenta, prostate, testis, activated T-lymphocytes and lymphokine-activated killer (LAK) lymphocytes.

The protein resides in the endoplasmic reticulum membrane. Its subcellular location is the golgi apparatus membrane. It is found in the nucleus membrane. Functionally, acts as a regulatory protein involved in the regulation of numerous cellular processes. Together with its homolog TMC8/EVER2, forms a complex with CIB1 in lymphocytes and keratynocytes where TMC6 and TMC8 stabilize CIB1 and reciprocally. Together with TMC8, also forms a complex with and activates zinc transporter ZNT1 at the ER membrane of keratynocytes, thereby facilitating zinc uptake into the ER. Down-regulates the activity of transcription factors induced by zinc and cytokines. Also plays a role in thermal sensation by inhibiting the M-channel (KCNQ2-KCNQ3 channel) current in primary sensory neurons. In Homo sapiens (Human), this protein is Transmembrane channel-like protein 6.